The primary structure comprises 298 residues: Cyclin-dependent kinase 2 homolog (298 aa).

A Protein kinase domain is found at 4-284 (YHKMEKIGEG…AKEALKHDYF (281 aa)). ATP contacts are provided by residues 10–18 (IGEGTYGVV) and K32. The residue at position 14 (T14) is a Phosphothreonine. Y15 is modified (phosphotyrosine). D125 acts as the Proton acceptor in catalysis. Position 158 is a phosphothreonine (T158).

The protein belongs to the protein kinase superfamily. CMGC Ser/Thr protein kinase family. CDC2/CDKX subfamily. May form a complex composed of at least the catalytic subunit CRK2 and a cyclin. Requires Mg(2+) as cofactor.

The protein resides in the cytoplasm. The enzyme catalyses L-seryl-[protein] + ATP = O-phospho-L-seryl-[protein] + ADP + H(+). The catalysed reaction is L-threonyl-[protein] + ATP = O-phospho-L-threonyl-[protein] + ADP + H(+). It carries out the reaction [DNA-directed RNA polymerase] + ATP = phospho-[DNA-directed RNA polymerase] + ADP + H(+). Its activity is regulated as follows. Phosphorylation at Thr-14 or Tyr-15 inactivates the enzyme, while phosphorylation at Thr-158 activates it. In terms of biological role, serine/threonine-protein kinase. Involved in the control of the cell cycle. Required for entry into S-phase and mitosis. Probable component of the kinase complex that phosphorylates the repetitive C-terminus of RNA polymerase II. This is Cyclin-dependent kinase 2 homolog from Theileria annulata.